Reading from the N-terminus, the 616-residue chain is Dihydroxy-acid dehydratase (616 aa).

Mg(2+) is bound at residue Asp-81. Position 122 (Cys-122) interacts with [2Fe-2S] cluster. Positions 123 and 124 each coordinate Mg(2+). The residue at position 124 (Lys-124) is an N6-carboxylysine. Cys-195 serves as a coordination point for [2Fe-2S] cluster. Glu-491 is a Mg(2+) binding site. Catalysis depends on Ser-517, which acts as the Proton acceptor.

The protein belongs to the IlvD/Edd family. Homodimer. It depends on [2Fe-2S] cluster as a cofactor. Requires Mg(2+) as cofactor.

It carries out the reaction (2R)-2,3-dihydroxy-3-methylbutanoate = 3-methyl-2-oxobutanoate + H2O. The catalysed reaction is (2R,3R)-2,3-dihydroxy-3-methylpentanoate = (S)-3-methyl-2-oxopentanoate + H2O. It functions in the pathway amino-acid biosynthesis; L-isoleucine biosynthesis; L-isoleucine from 2-oxobutanoate: step 3/4. It participates in amino-acid biosynthesis; L-valine biosynthesis; L-valine from pyruvate: step 3/4. Functions in the biosynthesis of branched-chain amino acids. Catalyzes the dehydration of (2R,3R)-2,3-dihydroxy-3-methylpentanoate (2,3-dihydroxy-3-methylvalerate) into 2-oxo-3-methylpentanoate (2-oxo-3-methylvalerate) and of (2R)-2,3-dihydroxy-3-methylbutanoate (2,3-dihydroxyisovalerate) into 2-oxo-3-methylbutanoate (2-oxoisovalerate), the penultimate precursor to L-isoleucine and L-valine, respectively. The protein is Dihydroxy-acid dehydratase of Klebsiella pneumoniae subsp. pneumoniae (strain ATCC 700721 / MGH 78578).